The sequence spans 134 residues: Small ribosomal subunit protein bS6 (134 aa).

Residues 113–122 (NRDIKEKEQP) are compositionally biased toward basic and acidic residues. The tract at residues 113 to 134 (NRDIKEKEQPSESNVDADLKVN) is disordered.

The protein belongs to the bacterial ribosomal protein bS6 family.

Functionally, binds together with bS18 to 16S ribosomal RNA. This Borrelia duttonii (strain Ly) protein is Small ribosomal subunit protein bS6.